The chain runs to 312 residues: Malate dehydrogenase (312 aa).

Residues 12-17 and aspartate 36 each bind NAD(+); that span reads GSGFTG. Positions 87 and 93 each coordinate substrate. NAD(+)-binding positions include asparagine 100 and 123-125; that span reads LTN. A substrate-binding site is contributed by asparagine 125. Serine 149 carries the post-translational modification Phosphoserine. Arginine 156 is a substrate binding site. Histidine 180 (proton acceptor) is an active-site residue.

It belongs to the LDH/MDH superfamily. MDH type 3 family.

The catalysed reaction is (S)-malate + NAD(+) = oxaloacetate + NADH + H(+). Functionally, catalyzes the reversible oxidation of malate to oxaloacetate. The sequence is that of Malate dehydrogenase from Oceanobacillus iheyensis (strain DSM 14371 / CIP 107618 / JCM 11309 / KCTC 3954 / HTE831).